We begin with the raw amino-acid sequence, 704 residues long: D-(-)-3-hydroxybutyrate oligomer hydrolase (704 aa).

An N-terminal signal peptide occupies residues 1–31 (MTTTNRNNLKLTALTAAVLTLSACGGSDAVA). The active-site Charge relay system is the Ser-309.

Belongs to the D-(-)-3-hydroxybutyrate oligomer hydrolase family.

It is found in the secreted. The catalysed reaction is (3R)-hydroxybutanoate dimer + H2O = 2 (R)-3-hydroxybutanoate + H(+). It participates in lipid metabolism; butanoate metabolism. Functionally, participates in the degradation of poly-3-hydroxybutyrate (PHB). It works downstream of poly(3-hydroxybutyrate) depolymerase, hydrolyzing D(-)-3-hydroxybutyrate oligomers of various length (3HB-oligomers) into 3HB-monomers. The protein is D-(-)-3-hydroxybutyrate oligomer hydrolase of Albidiferax ferrireducens (strain ATCC BAA-621 / DSM 15236 / T118) (Rhodoferax ferrireducens).